A 221-amino-acid polypeptide reads, in one-letter code: Early nodulin-like protein 4 (221 aa).

Residues Met-1 to Phe-21 form the signal peptide. One can recognise a Phytocyanin domain in the interval His-29–Ser-130. Asn-59 and Asn-85 each carry an N-linked (GlcNAc...) asparagine glycan. Cys-84 and Cys-118 are disulfide-bonded. The disordered stretch occupies residues Ser-130 to Leu-185. Asn-197 carries GPI-anchor amidated asparagine lipidation. The propeptide at Leu-198 to Val-221 is removed in mature form.

Belongs to the early nodulin-like (ENODL) family. As to expression, confined to flowers.

The protein localises to the cell membrane. In terms of biological role, may act as a carbohydrate transporter. The sequence is that of Early nodulin-like protein 4 from Arabidopsis thaliana (Mouse-ear cress).